The following is a 419-amino-acid chain: Protein arginine N-methyltransferase 8-B (419 aa).

A compositionally biased stretch (basic residues) spans 1–14 (MGLRHSSRCLLLRR). Positions 1–79 (MGLRHSSRCL…HTPHVSALSA (79 aa)) are disordered. G2 carries N-myristoyl glycine lipidation. Residues 33–63 (QHQQQQSISSIPSSQSLQPSPLPKPVTSVHH) are compositionally biased toward low complexity. R83 bears the Omega-N-methylarginine mark. Asymmetric dimethylarginine is present on R98. In terms of domain architecture, SAM-dependent MTase PRMT-type spans 98–402 (RDYYFDSYAH…RDLDFTFELD (305 aa)). S-adenosyl-L-methionine is bound by residues H111, R120, G144, 144 to 147 (GSGT), E166, and E195. Catalysis depends on residues E210 and E219.

The protein belongs to the class I-like SAM-binding methyltransferase superfamily. Protein arginine N-methyltransferase family. PRMT8 subfamily. As to quaternary structure, homodimer. Tetramer; individual homodimers associates to form a homotetramer. Homooctamer; individual homodimers associates to form a homooctamer and homooligomerization is required for proper localization to the cell membrane.

Its subcellular location is the cell membrane. It carries out the reaction L-arginyl-[protein] + S-adenosyl-L-methionine = N(omega)-methyl-L-arginyl-[protein] + S-adenosyl-L-homocysteine + H(+). The catalysed reaction is L-arginyl-[protein] + 2 S-adenosyl-L-methionine = N(omega),N(omega)-dimethyl-L-arginyl-[protein] + 2 S-adenosyl-L-homocysteine + 2 H(+). Functionally, S-adenosyl-L-methionine-dependent and membrane-associated arginine methyltransferase that can both catalyze the formation of omega-N monomethylarginine (MMA) and asymmetrical dimethylarginine (aDMA). This Danio rerio (Zebrafish) protein is Protein arginine N-methyltransferase 8-B (prmt8b).